We begin with the raw amino-acid sequence, 404 residues long: NADH-quinone oxidoreductase subunit D 2 (404 aa).

The protein belongs to the complex I 49 kDa subunit family. In terms of assembly, NDH-1 is composed of 14 different subunits. Subunits NuoB, C, D, E, F, and G constitute the peripheral sector of the complex.

The protein resides in the cell inner membrane. It catalyses the reaction a quinone + NADH + 5 H(+)(in) = a quinol + NAD(+) + 4 H(+)(out). Functionally, NDH-1 shuttles electrons from NADH, via FMN and iron-sulfur (Fe-S) centers, to quinones in the respiratory chain. The immediate electron acceptor for the enzyme in this species is believed to be ubiquinone. Couples the redox reaction to proton translocation (for every two electrons transferred, four hydrogen ions are translocated across the cytoplasmic membrane), and thus conserves the redox energy in a proton gradient. This Rhizobium etli (strain CIAT 652) protein is NADH-quinone oxidoreductase subunit D 2.